Consider the following 334-residue polypeptide: Large ribosomal subunit protein uL3 (334 aa).

Residues 1–10 (MGMKKSRPRR) show a composition bias toward basic residues. The segment at 1–20 (MGMKKSRPRRGSLAFSPRKR) is disordered.

It belongs to the universal ribosomal protein uL3 family. In terms of assembly, part of the 50S ribosomal subunit. Forms a cluster with proteins L14 and L24e.

Its function is as follows. One of the primary rRNA binding proteins, it binds directly near the 3'-end of the 23S rRNA, where it nucleates assembly of the 50S subunit. The protein is Large ribosomal subunit protein uL3 of Methanococcus maripaludis (strain C6 / ATCC BAA-1332).